The sequence spans 853 residues: DNA mismatch repair protein MutS (853 aa).

614-621 lines the ATP pocket; the sequence is GPNMGGKS.

Belongs to the DNA mismatch repair MutS family.

Functionally, this protein is involved in the repair of mismatches in DNA. It is possible that it carries out the mismatch recognition step. This protein has a weak ATPase activity. This is DNA mismatch repair protein MutS from Shigella flexneri serotype 5b (strain 8401).